The primary structure comprises 206 residues: GTP cyclohydrolase 1 (206 aa).

The Zn(2+) site is built by Cys95, His98, and Cys166.

It belongs to the GTP cyclohydrolase I family. Toroid-shaped homodecamer, composed of two pentamers of five dimers.

It catalyses the reaction GTP + H2O = 7,8-dihydroneopterin 3'-triphosphate + formate + H(+). It participates in cofactor biosynthesis; 7,8-dihydroneopterin triphosphate biosynthesis; 7,8-dihydroneopterin triphosphate from GTP: step 1/1. The sequence is that of GTP cyclohydrolase 1 from Bartonella bacilliformis (strain ATCC 35685 / KC583 / Herrer 020/F12,63).